Consider the following 571-residue polypeptide: Leucine aminopeptidase A2, chloroplastic (571 aa).

The N-terminal 42 residues, 1-42 (MATLRVSSLFASSSSSLHSNPSVFTKYQSSPKWAFSFPVTPL), are a transit peptide targeting the chloroplast. Positions 342 and 347 each coordinate Mg(2+). Residue Lys-354 is part of the active site. Positions 367, 427, and 429 each coordinate Mg(2+). Residue Arg-431 is part of the active site.

It belongs to the peptidase M17 family. In terms of assembly, homohexamer (dimer of homotrimers). It depends on Mg(2+) as a cofactor. Expressed during floral development. Expressed in healthy and senescent leaves, cotyledons (emergence from seed coats), pistils, sepals, petals, stamens, and floral buds (at protein level).

Its subcellular location is the plastid. It is found in the chloroplast. It carries out the reaction Release of an N-terminal amino acid, Xaa-|-Yaa-, in which Xaa is preferably Leu, but may be other amino acids including Pro although not Arg or Lys, and Yaa may be Pro. Amino acid amides and methyl esters are also readily hydrolyzed, but rates on arylamides are exceedingly low.. The catalysed reaction is Release of N-terminal proline from a peptide.. Its function is as follows. Catalyzes the removal of unsubstituted N-terminal amino acids from various peptides. When associated as homohexamer, catalyzes the proteolyzes of Xaa-Leu dipeptides. Possesses leucine aminopeptidase activity against the model substrate leucine-amido methyl coumarin. Presumably involved in the processing and regular turnover of intracellular proteins. Regulates wound signaling and has a role in insect defense. Functions as a molecular chaperone to protect proteins from heat-induced damage. This Solanum lycopersicum (Tomato) protein is Leucine aminopeptidase A2, chloroplastic.